Reading from the N-terminus, the 153-residue chain is Natriuretic peptides A (153 aa).

Positions 1 to 25 are cleaved as a signal peptide; that stretch reads MGSFSTIMASFLLFLAFQLQGQTRA. Propeptides lie at residues 26–123 and 93–103; these read NPVY…AAPR and DGGALGRGSWD. The tract at residues 54–105 is disordered; that stretch reads EDEVMPPQVLSDQSEEERAALSPLPEVPPWTGEVNPAQRDGGALGRGSWDSS. Ser-129 carries the phosphoserine modification. A disulfide bridge connects residues Cys-130 and Cys-146. The tract at residues 147-151 is important for degradation of atrial natriuretic peptide by IDE; the sequence is NSFRY.

Belongs to the natriuretic peptide family. As to quaternary structure, homodimer; disulfide-linked antiparallel dimer. In terms of processing, the precursor molecule is proteolytically cleaved by CORIN at Arg-123 to produce the atrial natriuretic peptide. Undergoes further proteolytic cleavage by unknown proteases to give rise to long-acting natriuretic peptide, vessel dilator and kaliuretic peptide. Additional processing gives rise to the auriculin and atriopeptin peptides. In the kidneys, alternative processing by an unknown protease results in the peptide urodilatin. Cleavage by MME initiates degradation of the factor and thereby regulates its activity. Degradation by IDE results in reduced activation of NPR1 (in vitro). During IDE degradation, the resulting products can temporarily stimulate NPR2 to produce cGMP, before the fragments are completely degraded and inactivated by IDE (in vitro). Post-translationally, degraded by IDE. In terms of processing, phosphorylation on Ser-129 decreases vasorelaxant activity.

It localises to the secreted. It is found in the perikaryon. The protein localises to the cell projection. Its function is as follows. Hormone that plays a key role in mediating cardio-renal homeostasis, and is involved in vascular remodeling and regulating energy metabolism. Acts by specifically binding and stimulating NPR1 to produce cGMP, which in turn activates effector proteins, such as PRKG1, that drive various biological responses. Regulates vasodilation, natriuresis, diuresis and aldosterone synthesis and is therefore essential for regulating blood pressure, controlling the extracellular fluid volume and maintaining the fluid-electrolyte balance. Also involved in inhibiting cardiac remodeling and cardiac hypertrophy by inducing cardiomyocyte apoptosis and attenuating the growth of cardiomyocytes and fibroblasts. Plays a role in female pregnancy by promoting trophoblast invasion and spiral artery remodeling in uterus, and thus prevents pregnancy-induced hypertension. In adipose tissue, acts in various cGMP- and PKG-dependent pathways to regulate lipid metabolism and energy homeostasis. This includes up-regulating lipid metabolism and mitochondrial oxygen utilization by activating the AMP-activated protein kinase (AMPK), and increasing energy expenditure by acting via MAPK11 to promote the UCP1-dependent thermogenesis of brown adipose tissue. Binds the clearance receptor NPR3 which removes the hormone from circulation. Functionally, may have a role in cardio-renal homeostasis through regulation of natriuresis, diuresis, vasodilation, and inhibiting aldosterone synthesis. In vitro, promotes the production of cGMP and induces vasodilation. May promote natriuresis, at least in part, by enhancing prostaglandin E2 synthesis resulting in the inhibition of renal Na+-K+-ATPase. However reports on the involvement of this peptide in mammal blood volume and blood pressure homeostasis are conflicting; according to a report, in vivo it is not sufficient to activate cGMP and does not inhibit collecting duct transport nor effect diuresis and natriuresis. Appears to bind to specific receptors that are distinct from the receptors bound by atrial natriuretic peptide and vessel dilator. Possibly enhances protein excretion in urine by decreasing proximal tubular protein reabsorption. May have a role in cardio-renal homeostasis through regulation of natriuresis, diuresis, and vasodilation. In vitro, promotes the production of cGMP and induces vasodilation. May promote natriuresis, at least in part, by enhancing prostaglandin E2 synthesis resulting in the inhibition of renal Na+-K+-ATPase. However reports on the involvement of this peptide in mammal blood volume and blood pressure homeostasis are conflicting; according to a report it is not sufficient to activate cGMP and does not inhibit collecting duct transport nor effect diuresis and natriuresis. Appears to bind to specific receptors that are distinct from the receptors bound by the atrial natriuretic and long-acting natriuretic peptides. Possibly functions in protein excretion in urine by maintaining the integrity of the proximal tubules and enhancing protein excretion by decreasing proximal tubular protein reabsorption. In terms of biological role, may have a role in cardio-renal homeostasis through regulation of diuresis and inhibiting aldosterone synthesis. In vitro, promotes the production of cGMP and induces vasodilation. May promote natriuresis, at least in part, by enhancing prostaglandin E2 synthesis resulting in the inhibition of renal Na+-K+-ATPase. May have a role in potassium excretion but not sodium excretion (natriuresis). Possibly enhances protein excretion in urine by decreasing proximal tubular protein reabsorption. Its function is as follows. Hormone produced in the kidneys that appears to be important for maintaining cardio-renal homeostasis. Mediates vasodilation, natriuresis and diuresis primarily in the renal system, in order to maintain the extracellular fluid volume and control the fluid-electrolyte balance. Specifically binds and stimulates cGMP production by renal transmembrane receptors, likely NPR1. Urodilatin not ANP, may be the natriuretic peptide responsible for the regulation of sodium and water homeostasis in the kidney. Functionally, may have a role in cardio-renal homeostasis through regulation of natriuresis and vasodilation. In vivo promotes natriuresis and in vitro, vasodilates renal artery strips. May have a role in cardio-renal homeostasis through regulation of regulation of natriuresis and vasodilation. In vivo promotes natriuresis. In vitro, vasodilates intestinal smooth muscle but not smooth muscle strips. In terms of biological role, may have a role in cardio-renal homeostasis through regulation of natriuresis and vasodilation. In vivo promotes natriuresis. In vitro, selectively vasodilates intestinal and vascular smooth muscle strips. Its function is as follows. May have a role in cardio-renal homeostasis through regulation of natriuresis and vasodilation. In vivo promotes natriuresis. In vitro, selectively vasodilates intestinal smooth muscle but not vascular smooth muscle strips. In Equus caballus (Horse), this protein is Natriuretic peptides A (NPPA).